The sequence spans 126 residues: Large ribosomal subunit protein bL19 (126 aa).

This sequence belongs to the bacterial ribosomal protein bL19 family.

This protein is located at the 30S-50S ribosomal subunit interface and may play a role in the structure and function of the aminoacyl-tRNA binding site. This chain is Large ribosomal subunit protein bL19, found in Dechloromonas aromatica (strain RCB).